We begin with the raw amino-acid sequence, 185 residues long: Large ribosomal subunit protein uL22 (185 aa).

Belongs to the universal ribosomal protein uL22 family. Part of the 50S ribosomal subunit.

Its function is as follows. This protein binds specifically to 23S rRNA. It makes multiple contacts with different domains of the 23S rRNA in the assembled 50S subunit and ribosome. In terms of biological role, the globular domain of the protein is located near the polypeptide exit tunnel on the outside of the subunit, while an extended beta-hairpin is found that lines the wall of the exit tunnel in the center of the 70S ribosome. This is Large ribosomal subunit protein uL22 from Pyrobaculum islandicum (strain DSM 4184 / JCM 9189 / GEO3).